The following is a 395-amino-acid chain: E3 ubiquitin-protein ligase RNFT1 (395 aa).

Disordered stretches follow at residues 1-58 (MQAS…SSRN) and 78-97 (YSHSEARPPDDFATESGEHG). The next 6 helical transmembrane spans lie at 118–138 (ILILGIKLVMQHITGISLGIG), 165–185 (CAWLLVFLAGSSVLLYYTFHS), 193–213 (IFLNPTLEQLSFWEVLWIVGI), 216–236 (FILKFFFMGLKCLILLVPSFI), 258–278 (IFVPIPVWFRYLISYGEFGNV), and 283–303 (LGILLALLYLILKLLDFFGHL). The interval 328 to 379 (CSDMDGICTICQAEFQKPVLLFCQHIFCEECITLWFNREKTCPLCRTVISEC) is required for ubiquitin ligase activity and for protection against ER stress-induced cell death. The RING-type zinc finger occupies 335–373 (CTICQAEFQKPVLLFCQHIFCEECITLWFNREKTCPLCR).

As to expression, predominantly expressed in testis.

The protein localises to the early endosome membrane. The catalysed reaction is S-ubiquitinyl-[E2 ubiquitin-conjugating enzyme]-L-cysteine + [acceptor protein]-L-lysine = [E2 ubiquitin-conjugating enzyme]-L-cysteine + N(6)-ubiquitinyl-[acceptor protein]-L-lysine.. The protein operates within protein modification; protein ubiquitination. Functionally, E3 ubiquitin-protein ligase that acts in the endoplasmic reticulum (ER)-associated degradation (ERAD) pathway, which targets misfolded proteins that accumulate in the endoplasmic reticulum (ER) for ubiquitination and subsequent proteasome-mediated degradation. Protects cells from ER stress-induced apoptosis. The sequence is that of E3 ubiquitin-protein ligase RNFT1 (Rnft1) from Mus musculus (Mouse).